We begin with the raw amino-acid sequence, 216 residues long: Protein Syd (216 aa).

This sequence belongs to the Syd family.

The protein resides in the cell inner membrane. Functionally, interacts with the SecY protein in vivo. May bind preferentially to an uncomplexed state of SecY, thus functioning either as a chelating agent for excess SecY in the cell or as a regulatory factor that negatively controls the translocase function. The protein is Protein Syd of Shewanella baltica (strain OS195).